Consider the following 177-residue polypeptide: Cytochrome c oxidase assembly protein CtaG (177 aa).

Topologically, residues 1–8 are cytoplasmic; that stretch reads MTQKAKNT. Residues 9 to 29 traverse the membrane as a helical; Signal-anchor for type II membrane protein segment; that stretch reads IYLLILIILSMLCLVYASVPL. Residues 30–177 are Periplasmic-facing; the sequence is YSIFCKVTGY…TFFKYKENTK (148 aa).

It belongs to the COX11/CtaG family.

It is found in the cell inner membrane. In terms of biological role, exerts its effect at some terminal stage of cytochrome c oxidase synthesis, probably by being involved in the insertion of the copper B into subunit I. This is Cytochrome c oxidase assembly protein CtaG from Ehrlichia ruminantium (strain Welgevonden).